The chain runs to 422 residues: Synaptotagmin-15 (422 aa).

Over 1 to 4 (MAEQ) the chain is Extracellular. Residues 5–27 (LALVIGCIIGGLLLLIGISCCLW) form a helical; Signal-anchor for type III membrane protein membrane-spanning segment. At 28–422 (KRLCTTFTYE…WHALCRPMEP (395 aa)) the chain is on the cytoplasmic side. C2 domains follow at residues 148–267 (CLGR…VIWR) and 279–400 (EFGD…EHWN).

Belongs to the synaptotagmin family. Homodimer.

It is found in the membrane. May be involved in the trafficking and exocytosis of secretory vesicles in non-neuronal tissues. In Rattus norvegicus (Rat), this protein is Synaptotagmin-15 (Syt15).